The following is a 615-amino-acid chain: Elongation factor 4 (615 aa).

Residues 17 to 198 (ASIRNFCIIA…RVSRTIPAPV (182 aa)) form the tr-type G domain. Residues 29–34 (DHGKST) and 145–148 (NKID) each bind GTP.

The protein belongs to the TRAFAC class translation factor GTPase superfamily. Classic translation factor GTPase family. LepA subfamily.

The protein localises to the cell membrane. The enzyme catalyses GTP + H2O = GDP + phosphate + H(+). Required for accurate and efficient protein synthesis under certain stress conditions. May act as a fidelity factor of the translation reaction, by catalyzing a one-codon backward translocation of tRNAs on improperly translocated ribosomes. Back-translocation proceeds from a post-translocation (POST) complex to a pre-translocation (PRE) complex, thus giving elongation factor G a second chance to translocate the tRNAs correctly. Binds to ribosomes in a GTP-dependent manner. The protein is Elongation factor 4 of Clavibacter sepedonicus (Clavibacter michiganensis subsp. sepedonicus).